A 59-amino-acid chain; its full sequence is Large ribosomal subunit protein eL37 (59 aa).

Positions 20, 23, 35, and 38 each coordinate Zn(2+). Residues 20–38 (CRRCGRHSFHRRKGYCAAC) form a C4-type zinc finger.

This sequence belongs to the eukaryotic ribosomal protein eL37 family. Zn(2+) serves as cofactor.

Binds to the 23S rRNA. This Archaeoglobus fulgidus (strain ATCC 49558 / DSM 4304 / JCM 9628 / NBRC 100126 / VC-16) protein is Large ribosomal subunit protein eL37 (rpl37e).